Consider the following 370-residue polypeptide: CST complex subunit STN1 (370 aa).

Residues 1 to 187 (MESNSSQCED…KVYDQPFHSP (187 aa)) are interaction with CTC1. A DNA-binding region (OB) is located at residues 57-157 (VDILGTVIGV…EIHATTYYKV (101 aa)). Winged helix-turn-helix (wHTH) stretches follow at residues 193-297 (EALS…YVTR) and 298-370 (EDKE…YTAF).

This sequence belongs to the STN1 family. In terms of assembly, component of the CST complex, composed of TEN1/C17orf106, CTC1/C17orf68 and STN1; in the complex interacts directly with TEN1 and CTC1. Interacts with ACD/TPP1, POT1 and POLA1.

The protein localises to the nucleus. It localises to the chromosome. It is found in the telomere. In terms of biological role, component of the CST complex proposed to act as a specialized replication factor promoting DNA replication under conditions of replication stress or natural replication barriers such as the telomere duplex. The CST complex binds single-stranded DNA with high affinity in a sequence-independent manner, while isolated subunits bind DNA with low affinity by themselves. Initially the CST complex has been proposed to protect telomeres from DNA degradation. However, the CST complex has been shown to be involved in several aspects of telomere replication. The CST complex inhibits telomerase and is involved in telomere length homeostasis; it is proposed to bind to newly telomerase-synthesized 3' overhangs and to terminate telomerase action implicating the association with the ACD:POT1 complex thus interfering with its telomerase stimulation activity. The CST complex is also proposed to be involved in fill-in synthesis of the telomeric C-strand probably implicating recruitment and activation of DNA polymerase alpha. The CST complex facilitates recovery from many forms of exogenous DNA damage; seems to be involved in the re-initiation of DNA replication at repaired forks and/or dormant origins. Required for efficicient replication of the duplex region of the telomere. Promotes efficient replication of lagging-strand telomeres. Promotes general replication start following replication-fork stalling implicating new origin firing. May be in involved in C-strand fill-in during late S/G2 phase independent of its role in telomere duplex replication. The protein is CST complex subunit STN1 of Bos taurus (Bovine).